Consider the following 372-residue polypeptide: Queuine tRNA-ribosyltransferase (372 aa).

Catalysis depends on aspartate 92, which acts as the Proton acceptor. Substrate-binding positions include 92–96 (DSGGF), aspartate 146, glutamine 188, and glycine 215. Residues 246 to 252 (GIGTLRE) are RNA binding. Aspartate 265 acts as the Nucleophile in catalysis. Residues 270–274 (TRLGR) are RNA binding; important for wobble base 34 recognition. Cysteine 303, cysteine 305, cysteine 308, and histidine 334 together coordinate Zn(2+).

The protein belongs to the queuine tRNA-ribosyltransferase family. As to quaternary structure, homodimer. Within each dimer, one monomer is responsible for RNA recognition and catalysis, while the other monomer binds to the replacement base PreQ1. Zn(2+) is required as a cofactor.

It carries out the reaction 7-aminomethyl-7-carbaguanine + guanosine(34) in tRNA = 7-aminomethyl-7-carbaguanosine(34) in tRNA + guanine. Its pathway is tRNA modification; tRNA-queuosine biosynthesis. Catalyzes the base-exchange of a guanine (G) residue with the queuine precursor 7-aminomethyl-7-deazaguanine (PreQ1) at position 34 (anticodon wobble position) in tRNAs with GU(N) anticodons (tRNA-Asp, -Asn, -His and -Tyr). Catalysis occurs through a double-displacement mechanism. The nucleophile active site attacks the C1' of nucleotide 34 to detach the guanine base from the RNA, forming a covalent enzyme-RNA intermediate. The proton acceptor active site deprotonates the incoming PreQ1, allowing a nucleophilic attack on the C1' of the ribose to form the product. After dissociation, two additional enzymatic reactions on the tRNA convert PreQ1 to queuine (Q), resulting in the hypermodified nucleoside queuosine (7-(((4,5-cis-dihydroxy-2-cyclopenten-1-yl)amino)methyl)-7-deazaguanosine). This is Queuine tRNA-ribosyltransferase from Synechococcus sp. (strain CC9311).